Reading from the N-terminus, the 638-residue chain is 3D-(3,5/4)-trihydroxycyclohexane-1,2-dione hydrolase (638 aa).

Residue Glu67 coordinates thiamine diphosphate. Residues 442–523 (SLPGDLQRLW…INIMLFDNSG (82 aa)) are thiamine pyrophosphate binding. Positions 494 and 521 each coordinate Mg(2+).

Belongs to the TPP enzyme family. It depends on Mg(2+) as a cofactor. Thiamine diphosphate is required as a cofactor.

The enzyme catalyses 3D-3,5/4-trihydroxycyclohexane-1,2-dione + H2O = 5-deoxy-D-glucuronate + H(+). The protein operates within polyol metabolism; myo-inositol degradation into acetyl-CoA; acetyl-CoA from myo-inositol: step 3/7. Involved in the cleavage of the C1-C2 bond of 3D-(3,5/4)-trihydroxycyclohexane-1,2-dione (THcHDO) to yield 5-deoxy-glucuronate (5DG). The sequence is that of 3D-(3,5/4)-trihydroxycyclohexane-1,2-dione hydrolase from Listeria innocua serovar 6a (strain ATCC BAA-680 / CLIP 11262).